We begin with the raw amino-acid sequence, 212 residues long: External core antigen (212 aa).

Residues methionine 1–alanine 19 form the signal peptide. The tract at residues glycine 25–leucine 27 is HBEAG. The disordered stretch occupies residues asparagine 165–cysteine 212. Residues valine 178–serine 205 show a composition bias toward basic residues. 3 tandem repeats follow at residues serine 184–proline 190, serine 191–glutamine 198, and serine 199–glutamine 206. The 3 X 8 AA repeats of S-P-R-R-R-R-S-Q stretch occupies residues serine 184–glutamine 206. A propeptide spanning residues serine 184–cysteine 212 is cleaved from the precursor.

This sequence belongs to the orthohepadnavirus precore antigen family. In terms of assembly, homodimerizes. Post-translationally, phosphorylated. In terms of processing, cleaved by host furin.

The protein resides in the secreted. The protein localises to the host nucleus. May regulate immune response to the intracellular capsid in acting as a T-cell tolerogen, by having an immunoregulatory effect which prevents destruction of infected cells by cytotoxic T-cells. This immune regulation may predispose to chronicity during perinatal infections and prevent severe liver injury during adult infections. This is External core antigen from Hepatitis B virus genotype F2 (isolate Brazil/w4B) (HBV-F).